The chain runs to 422 residues: 26S proteasome non-ATPase regulatory subunit 11 (422 aa).

Alanine 2 is modified (N-acetylalanine). Serine 14 and serine 23 each carry phosphoserine. The 169-residue stretch at 224 to 392 (DWKTAYSYFY…GVLIIFDEPP (169 aa)) folds into the PCI domain. A Glycyl lysine isopeptide (Lys-Gly) (interchain with G-Cter in SUMO2) cross-link involves residue lysine 274.

Belongs to the proteasome subunit S9 family. As to quaternary structure, component of the 19S proteasome regulatory particle complex. The 26S proteasome consists of a 20S core particle (CP) and two 19S regulatory subunits (RP). The regulatory particle is made of a lid composed of 9 subunits including PSMD11, a base containing 6 ATPases and few additional components. Phosphorylated by AMPK.

The protein localises to the nucleus. It localises to the cytoplasm. The protein resides in the cytosol. Component of the 26S proteasome, a multiprotein complex involved in the ATP-dependent degradation of ubiquitinated proteins. This complex plays a key role in the maintenance of protein homeostasis by removing misfolded or damaged proteins, which could impair cellular functions, and by removing proteins whose functions are no longer required. Therefore, the proteasome participates in numerous cellular processes, including cell cycle progression, apoptosis, or DNA damage repair. In the complex, PSMD11 is required for proteasome assembly. Plays a key role in increased proteasome activity in embryonic stem cells (ESCs): its high expression in ESCs promotes enhanced assembly of the 26S proteasome, followed by higher proteasome activity. This chain is 26S proteasome non-ATPase regulatory subunit 11 (PSMD11), found in Bos taurus (Bovine).